A 376-amino-acid polypeptide reads, in one-letter code: 1-deoxy-D-xylulose 5-phosphate reductoisomerase (376 aa).

NADPH is bound by residues S10, G11, S12, V13, G36, K37, N38, and N118. K119 is a binding site for 1-deoxy-D-xylulose 5-phosphate. E120 serves as a coordination point for NADPH. Position 144 (D144) interacts with Mn(2+). Residues S145, E146, S170, and H193 each coordinate 1-deoxy-D-xylulose 5-phosphate. E146 is a Mn(2+) binding site. G199 provides a ligand contact to NADPH. S206, N211, K212, and E215 together coordinate 1-deoxy-D-xylulose 5-phosphate. E215 serves as a coordination point for Mn(2+).

The protein belongs to the DXR family. Mg(2+) is required as a cofactor. Mn(2+) serves as cofactor.

The enzyme catalyses 2-C-methyl-D-erythritol 4-phosphate + NADP(+) = 1-deoxy-D-xylulose 5-phosphate + NADPH + H(+). It functions in the pathway isoprenoid biosynthesis; isopentenyl diphosphate biosynthesis via DXP pathway; isopentenyl diphosphate from 1-deoxy-D-xylulose 5-phosphate: step 1/6. In terms of biological role, catalyzes the NADPH-dependent rearrangement and reduction of 1-deoxy-D-xylulose-5-phosphate (DXP) to 2-C-methyl-D-erythritol 4-phosphate (MEP). The chain is 1-deoxy-D-xylulose 5-phosphate reductoisomerase from Macrococcus caseolyticus (strain JCSC5402) (Macrococcoides caseolyticum).